We begin with the raw amino-acid sequence, 196 residues long: Protein GrpE (196 aa).

The tract at residues 1-41 is disordered; that stretch reads MSSKEQKTPEGQAPEEIITEQHDDVEAVEPEVSAEQVDPRD.

This sequence belongs to the GrpE family. In terms of assembly, homodimer.

It is found in the cytoplasm. Functionally, participates actively in the response to hyperosmotic and heat shock by preventing the aggregation of stress-denatured proteins, in association with DnaK and GrpE. It is the nucleotide exchange factor for DnaK and may function as a thermosensor. Unfolded proteins bind initially to DnaJ; upon interaction with the DnaJ-bound protein, DnaK hydrolyzes its bound ATP, resulting in the formation of a stable complex. GrpE releases ADP from DnaK; ATP binding to DnaK triggers the release of the substrate protein, thus completing the reaction cycle. Several rounds of ATP-dependent interactions between DnaJ, DnaK and GrpE are required for fully efficient folding. The polypeptide is Protein GrpE (Klebsiella pneumoniae (strain 342)).